Consider the following 146-residue polypeptide: Hemoglobin subunit beta (146 aa).

Val1 is modified (N-acetylvaline). The Globin domain maps to 2–146 (HLSADEKNAL…VANALAHKYH (145 aa)). At Ser44 the chain carries Phosphoserine. Position 59 is an N6-acetyllysine (Lys59). Residue His63 coordinates heme b. Lys82 carries the post-translational modification N6-acetyllysine. Residue His92 participates in heme b binding. At Cys93 the chain carries S-nitrosocysteine. Lys144 carries the post-translational modification N6-acetyllysine.

The protein belongs to the globin family. Heterotetramer of two alpha chains and two beta chains. Red blood cells.

Functionally, involved in oxygen transport from the lung to the various peripheral tissues. The chain is Hemoglobin subunit beta from Sciurus carolinensis (Eastern gray squirrel).